The chain runs to 961 residues: Alanine--tRNA ligase, chloroplastic/mitochondrial (961 aa).

Positions 641, 645, 743, and 747 each coordinate Zn(2+).

Belongs to the class-II aminoacyl-tRNA synthetase family. In terms of assembly, monomer. Requires Zn(2+) as cofactor.

It localises to the plastid. The protein localises to the chloroplast. It is found in the mitochondrion. The catalysed reaction is tRNA(Ala) + L-alanine + ATP = L-alanyl-tRNA(Ala) + AMP + diphosphate. Catalyzes the attachment of alanine to tRNA(Ala) in a two-step reaction: alanine is first activated by ATP to form Ala-AMP and then transferred to the acceptor end of tRNA(Ala). Also edits incorrectly charged tRNA(Ala) via its editing domain. The polypeptide is Alanine--tRNA ligase, chloroplastic/mitochondrial (Sorghum bicolor (Sorghum)).